A 498-amino-acid chain; its full sequence is ATP synthase subunit beta, chloroplastic (498 aa).

172–179 (GGAGVGKT) is a binding site for ATP.

The protein belongs to the ATPase alpha/beta chains family. In terms of assembly, F-type ATPases have 2 components, CF(1) - the catalytic core - and CF(0) - the membrane proton channel. CF(1) has five subunits: alpha(3), beta(3), gamma(1), delta(1), epsilon(1). CF(0) has four main subunits: a(1), b(1), b'(1) and c(9-12).

Its subcellular location is the plastid. It is found in the chloroplast thylakoid membrane. The catalysed reaction is ATP + H2O + 4 H(+)(in) = ADP + phosphate + 5 H(+)(out). Produces ATP from ADP in the presence of a proton gradient across the membrane. The catalytic sites are hosted primarily by the beta subunits. This Balaka seemannii protein is ATP synthase subunit beta, chloroplastic.